Here is a 940-residue protein sequence, read N- to C-terminus: Gamma-aminobutyric acid type B receptor subunit 2 (940 aa).

The N-terminal stretch at Met1–Gly40 is a signal peptide. At Trp41 to Ser482 the chain is on the extracellular side. Asn89 is a glycosylation site (N-linked (GlcNAc...) asparagine). 3 disulfide bridges follow: Cys107–Cys134, Cys236–Cys265, and Cys264–Cys301. N-linked (GlcNAc...) asparagine glycosylation is found at Asn297, Asn388, Asn403, and Asn452. A helical membrane pass occupies residues Ile483 to Ile503. Over Lys504 to Leu521 the chain is Cytoplasmic. Residues Ile522–Phe542 form a helical membrane-spanning segment. Residues Val543–Thr550 lie on the Extracellular side of the membrane. A helical membrane pass occupies residues Leu551 to Phe571. At Ala572–Leu596 the chain is on the cytoplasmic side. A helical membrane pass occupies residues Leu597–Val617. Over Asp618–Thr653 the chain is Extracellular. The chain crosses the membrane as a helical span at residues Ile654 to Ala674. The Cytoplasmic portion of the chain corresponds to Trp675–Tyr690. The helical transmembrane segment at Ile691–Leu711 threads the bilayer. At Thr712–Gln719 the chain is on the extracellular side. The chain crosses the membrane as a helical span at residues Phe720 to Val740. Over Pro741 to Leu940 the chain is Cytoplasmic. Residues Thr762–Gly789 are disordered. The segment covering Thr772–Arg786 has biased composition (polar residues). A phosphoserine mark is found at Ser775 and Ser778. Residues Asn780–Thr818 are a coiled coil. The residue at position 818 (Thr818) is a Phosphothreonine. Phosphoserine is present on residues Ser883, Ser892, Ser912, Ser915, Ser919, and Ser923.

It belongs to the G-protein coupled receptor 3 family. GABA-B receptor subfamily. Heterodimer of GABBR1 and GABBR2. Homodimers may form, but are inactive. Interacts (via C-terminus) with ATF4 (via leucine zipper domain). Interacts with KCTD8, KCTD12 and KCTD16; this interaction determines the pharmacology and kinetics of the receptor response, the KCTD proteins markedly accelerating the GABA-B response, although to different extents. In terms of tissue distribution, highly expressed in areas of the brain including thalamic nuclei, the hippocampus, cerebellar Purkinje cells and the medial habenula, and moderately expressed in the cerebral cortex, certain anterioventral thalamic nuclei, dorsal medial hypothalamic nucleus and suprachiasmatic nuclei. Also weakly expressed in the testis.

The protein localises to the cell membrane. The protein resides in the postsynaptic cell membrane. Its subcellular location is the perikaryon. It localises to the cell projection. It is found in the dendrite. Its function is as follows. Component of a heterodimeric G-protein coupled receptor for GABA, formed by GABBR1 and GABBR2. Within the heterodimeric GABA receptor, only GABBR1 seems to bind agonists, while GABBR2 mediates coupling to G proteins. Ligand binding causes a conformation change that triggers signaling via guanine nucleotide-binding proteins (G proteins) and modulates the activity of down-stream effectors, such as adenylate cyclase. Signaling inhibits adenylate cyclase, stimulates phospholipase A2, activates potassium channels, inactivates voltage-dependent calcium-channels and modulates inositol phospholipid hydrolysis. Plays a critical role in the fine-tuning of inhibitory synaptic transmission. Pre-synaptic GABA receptor inhibits neurotransmitter release by down-regulating high-voltage activated calcium channels, whereas postsynaptic GABA receptor decreases neuronal excitability by activating a prominent inwardly rectifying potassium (Kir) conductance that underlies the late inhibitory postsynaptic potentials. Not only implicated in synaptic inhibition but also in hippocampal long-term potentiation, slow wave sleep, muscle relaxation and antinociception. The protein is Gamma-aminobutyric acid type B receptor subunit 2 (Gabbr2) of Rattus norvegicus (Rat).